A 339-amino-acid polypeptide reads, in one-letter code: MAPQSNRKDLHLDAVLHHDMNMKSKTAGFESVEFEHCALPECDFNAVDLSSEFLGHSLALPFLISSMTGGAKDAEIINCRLAEAASEMGIAMGVGSQRVSLEDSLHSGLGKTIRDLAKGVPLYSNLGAAQLMDKQRFDNAQRAVDFIQADALFVHLNPMQEAFQQNGDHDWIGVLKSIEQLKQRVDVPMIIKEVGFGISGVVAKQLVEAGVDAIDVAGAGGTSWSAVEGYCQTDNKMQRAAELFRDWGIPTAKCLEQIRGQYPDLPLIASGGVYNGLEAAKAVHLGANLVGQAGAVLKAATISTESIVEHFEQMALELRLACFGTGSANLRALTQARRL.

Position 7–8 (7–8) interacts with substrate; that stretch reads RK. Residues Ser65, 66–68, Ser96, and Asn125 each bind FMN; that span reads SMT. 96-98 contacts substrate; it reads SQR. Gln160 provides a ligand contact to substrate. Glu161 contributes to the Mg(2+) binding site. FMN-binding positions include Lys192, Thr222, and 293–294; that span reads AG.

It belongs to the IPP isomerase type 2 family. In terms of assembly, homooctamer. Dimer of tetramers. FMN is required as a cofactor. NADPH serves as cofactor. Requires Mg(2+) as cofactor.

It is found in the cytoplasm. The catalysed reaction is isopentenyl diphosphate = dimethylallyl diphosphate. Its function is as follows. Involved in the biosynthesis of isoprenoids. Catalyzes the 1,3-allylic rearrangement of the homoallylic substrate isopentenyl (IPP) to its allylic isomer, dimethylallyl diphosphate (DMAPP). The chain is Isopentenyl-diphosphate delta-isomerase from Vibrio campbellii (strain ATCC BAA-1116).